The following is a 485-amino-acid chain: MTITTQQLIALLPLLIVGLTVVVVMLSIAWRRNHFLNATLSVVGLNAALLSLWFVGQAGAMDVTPLMRVDGYAMLYTGLVLLASLATCTFAYPWLQGYNDNKEEFYLLVLIAALGGILLANANHLASLFLGIELISLPLFGLVGYAFRQKRSLEAAIKYTILSAAASSFLLFGMALVYAQSGSLSFVTLGKSLADNMLSEPLLLAGLGLMIVGLGFKLSLVPFHLWTPDVYQGAPAPVSTFLATASKIAIFGVVMRLFLYAPVGDSEAVRVVLGVLAFASILFGNLMALTQTNIKRLLGYSSISHLGYLLVALIALKSGDMSMETVGVYLAGYLFSSLGAFGVVSLMSSPYRGPDADSLYSYRGLFWHRPILSAVMTVMMLSLAGIPMTLGFIGKFYVLAVGVQSNLWWLTGAVVVGSAIGLYYYLRVAVSLYLNAPQQLNRDAPSNWAYSAGGVVVLISALLVLVLGVWPQPLITLVQLAKPLM.

The next 14 membrane-spanning stretches (helical) occupy residues 8 to 28, 35 to 55, 75 to 95, 105 to 125, 127 to 147, 159 to 179, 203 to 223, 235 to 255, 271 to 291, 297 to 317, 326 to 346, 374 to 394, 408 to 427, and 455 to 475; these read LIAL…MLSI, FLNA…LWFV, LYTG…YPWL, FYLL…ANHL, SLFL…GYAF, YTIL…LVYA, LLAG…LVPF, PAPV…GVVM, VVLG…ALTQ, LLGY…IALK, VGVY…VVSL, AVMT…GFIG, WWLT…YYLR, and VVVL…QPLI.

The protein belongs to the complex I subunit 2 family. In terms of assembly, NDH-1 is composed of 13 different subunits. Subunits NuoA, H, J, K, L, M, N constitute the membrane sector of the complex.

It localises to the cell inner membrane. It carries out the reaction a quinone + NADH + 5 H(+)(in) = a quinol + NAD(+) + 4 H(+)(out). In terms of biological role, NDH-1 shuttles electrons from NADH, via FMN and iron-sulfur (Fe-S) centers, to quinones in the respiratory chain. The immediate electron acceptor for the enzyme in this species is believed to be ubiquinone. Couples the redox reaction to proton translocation (for every two electrons transferred, four hydrogen ions are translocated across the cytoplasmic membrane), and thus conserves the redox energy in a proton gradient. The polypeptide is NADH-quinone oxidoreductase subunit N (Cronobacter sakazakii (strain ATCC BAA-894) (Enterobacter sakazakii)).